A 316-amino-acid polypeptide reads, in one-letter code: UDP-3-O-acylglucosamine N-acyltransferase 2 (316 aa).

The active-site Proton acceptor is H230.

This sequence belongs to the transferase hexapeptide repeat family. LpxD subfamily. As to quaternary structure, homotrimer.

The catalysed reaction is a UDP-3-O-[(3R)-3-hydroxyacyl]-alpha-D-glucosamine + a (3R)-hydroxyacyl-[ACP] = a UDP-2-N,3-O-bis[(3R)-3-hydroxyacyl]-alpha-D-glucosamine + holo-[ACP] + H(+). It functions in the pathway bacterial outer membrane biogenesis; LPS lipid A biosynthesis. Catalyzes the N-acylation of UDP-3-O-acylglucosamine using 3-hydroxyacyl-ACP as the acyl donor. Is involved in the biosynthesis of lipid A, a phosphorylated glycolipid that anchors the lipopolysaccharide to the outer membrane of the cell. The protein is UDP-3-O-acylglucosamine N-acyltransferase 2 of Sulfurimonas denitrificans (strain ATCC 33889 / DSM 1251) (Thiomicrospira denitrificans (strain ATCC 33889 / DSM 1251)).